We begin with the raw amino-acid sequence, 602 residues long: Putative ankyrin repeat protein L100 (602 aa).

ANK repeat units lie at residues 133-162, 269-294, 295-324, 325-354, 355-384, 386-414, 416-444, 445-474, 476-504, 506-534, and 536-566; these read VLFY…SLIS, YLEK…KKSI, NKER…NINL, LKGT…DIHI, RDNA…DIHT, SSQA…DIRS, ENIL…DVLS, KGVE…DICA, DNEA…DVKA, DNEA…DITA, and NNEA…DVHA.

The sequence is that of Putative ankyrin repeat protein L100 from Acanthamoeba polyphaga mimivirus (APMV).